The primary structure comprises 145 residues: MRATDKQRGFTLLEIMVVIVIIGVLASLVVPNLMGNKEKADKQKAVSDIVALENALDMYKLDNHHYPTTNQGLESLVEAPTLPPLAANYNKEGYIKRLPADPWGNDYVLVNPGEHGAYDLLSAGPDGEMGTEDDITNWGLSKKKK.

A propeptide spans 1–9 (MRATDKQRG) (leader sequence). N-methylphenylalanine is present on Phe-10. A helical membrane pass occupies residues 10 to 30 (FTLLEIMVVIVIIGVLASLVV). The interval 123-145 (AGPDGEMGTEDDITNWGLSKKKK) is disordered.

Belongs to the GSP G family. In terms of assembly, type II secretion system is composed of four main components: the outer membrane complex, the inner membrane complex, the cytoplasmic secretion ATPase and the periplasm-spanning pseudopilus. Forms homomultimers. Cleaved by the prepilin peptidase. Post-translationally, methylated by prepilin peptidase at the amino group of the N-terminal phenylalanine once the leader sequence is cleaved.

It is found in the cell inner membrane. Core component of the type II secretion system required for the energy-dependent secretion of extracellular factors such as proteases and toxins from the periplasm. Pseudopilin (pilin-like) protein that polymerizes to form the pseudopilus. Further polymerization triggers pseudopilus growth. The sequence is that of Type II secretion system core protein G (gspG) from Escherichia coli (strain K12).